A 497-amino-acid polypeptide reads, in one-letter code: 4,4'-diapolycopene oxygenase (497 aa).

It belongs to the carotenoid/retinoid oxidoreductase family. FAD is required as a cofactor.

The enzyme catalyses all-trans-4,4'-diapolycopene + 4 AH2 + 4 O2 = all-trans-4,4'-diapolycopene-4,4'-dial + 4 A + 6 H2O. It catalyses the reaction all-trans-4,4'-diaponeurosporene + 2 AH2 + 2 O2 = 4,4'-diaponeurosporenal + 2 A + 3 H2O. It participates in carotenoid biosynthesis. Involved in the biosynthesis of C30 carotenoids. Catalyzes the oxidation of the terminal methyl side groups of 4,4'-diapolycopene to yield 4,4'-diapolycopen-4,4'-dial via the aldehyde intermediate 4,4'-diapolycopen-al. Also able to catalyze the oxidation of the terminal methyl side group of 4,4'-diaponeurosporene to form 4,4'-diaponeurosporen-4-al. It has moderate to low activity on the C40 substrates neurosporene and lycopene, and has no detectable activity on zeta-carotene or beta-carotene. This is 4,4'-diapolycopene oxygenase from Methylomonas sp.